Consider the following 123-residue polypeptide: Phospholipase A2 (123 aa).

Cystine bridges form between Cys-11–Cys-77, Cys-27–Cys-123, Cys-29–Cys-45, Cys-44–Cys-105, Cys-51–Cys-98, Cys-61–Cys-91, and Cys-84–Cys-96. Ca(2+) contacts are provided by Tyr-28, Gly-30, and Gly-32. Residue His-48 is part of the active site. Position 49 (Asp-49) interacts with Ca(2+). The active site involves Asp-99.

This sequence belongs to the phospholipase A2 family. Monomer or homodimer. It depends on Ca(2+) as a cofactor. In terms of processing, activated by trypsin cleavage in the duodenum. Can also be activated by thrombin or autocatalytically.

The protein resides in the secreted. The catalysed reaction is a 1,2-diacyl-sn-glycero-3-phosphocholine + H2O = a 1-acyl-sn-glycero-3-phosphocholine + a fatty acid + H(+). It catalyses the reaction 1,2-ditetradecanoyl-sn-glycero-3-phosphocholine + H2O = 1-tetradecanoyl-sn-glycero-3-phosphocholine + tetradecanoate + H(+). The enzyme catalyses 1,2-dihexadecanoyl-sn-glycero-3-phosphocholine + H2O = 1-hexadecanoyl-sn-glycero-3-phosphocholine + hexadecanoate + H(+). It carries out the reaction 1-hexadecanoyl-2-(9Z-octadecenoyl)-sn-glycero-3-phosphocholine + H2O = 1-hexadecanoyl-sn-glycero-3-phosphocholine + (9Z)-octadecenoate + H(+). The catalysed reaction is 1-hexadecanoyl-2-(5Z,8Z,11Z,14Z-eicosatetraenoyl)-sn-glycero-3-phosphocholine + H2O = 1-hexadecanoyl-sn-glycero-3-phosphocholine + (5Z,8Z,11Z,14Z)-eicosatetraenoate + H(+). It catalyses the reaction 1-hexadecanoyl-2-(9Z-octadecenoyl)-sn-glycero-3-phospho-(1'-sn-glycerol) + H2O = 1-hexadecanoyl-sn-glycero-3-phospho-(1'-sn-glycerol) + (9Z)-octadecenoate + H(+). The enzyme catalyses N-hexadecanoyl-1,2-di-(9Z-octadecenoyl)-sn-glycero-3-phosphoethanolamine + H2O = N-hexadecanoyl-1-(9Z-octadecenoyl)-sn-glycero-3-phosphoethanolamine + (9Z)-octadecenoate + H(+). It carries out the reaction 1-hexadecanoyl-2-(9Z,12Z-octadecadienoyl)-sn-glycero-3-phosphoethanolamine + H2O = 1-hexadecanoyl-sn-glycero-3-phosphoethanolamine + (9Z,12Z)-octadecadienoate + H(+). The catalysed reaction is N,1-dihexadecanoyl-2-(9Z,12Z-octadecadienoyl)-sn-glycero-3-phosphoethanolamine + H2O = N,1-dihexadecanoyl-sn-glycero-3-phosphoethanolamine + (9Z,12Z)-octadecadienoate + H(+). In terms of biological role, secretory calcium-dependent phospholipase A2 that primarily targets dietary phospholipids in the intestinal tract. Hydrolyzes the ester bond of the fatty acyl group attached at sn-2 position of phospholipids (phospholipase A2 activity) with preference for phosphatidylethanolamines and phosphatidylglycerols over phosphatidylcholines. May play a role in the biosynthesis of N-acyl ethanolamines that regulate energy metabolism and inflammation in the intestinal tract. Hydrolyzes N-acyl phosphatidylethanolamines to N-acyl lysophosphatidylethanolamines, which are further cleaved by a lysophospholipase D to release N-acyl ethanolamines. May act in an autocrine and paracrine manner. Has anti-helminth activity in a process regulated by gut microbiota. Upon helminth infection of intestinal epithelia, directly affects phosphatidylethanolamine contents in the membrane of helminth larvae, likely controlling an array of phospholipid-mediated cellular processes such as membrane fusion and cell division while providing for better immune recognition, ultimately reducing larvae integrity and infectivity. This Ovis aries (Sheep) protein is Phospholipase A2 (PLA2G1B).